The following is a 255-amino-acid chain: Small ribosomal subunit protein eS1 (255 aa).

The span at 1–18 shows a compositional bias: basic residues; it reads MAVGKNKRLSKGKKGLKK. Positions 1–20 are disordered; it reads MAVGKNKRLSKGKKGLKKRV. Ala2 is modified (N-acetylalanine; partial).

The protein belongs to the eukaryotic ribosomal protein eS1 family. Component of the small ribosomal subunit. Mature ribosomes consist of a small (40S) and a large (60S) subunit. The 40S subunit contains about 33 different proteins and 1 molecule of RNA (18S). The 60S subunit contains about 49 different proteins and 3 molecules of RNA (25S, 5.8S and 5S).

Its subcellular location is the cytoplasm. This chain is Small ribosomal subunit protein eS1, found in Coccidioides immitis (strain RS) (Valley fever fungus).